A 281-amino-acid chain; its full sequence is Probable thioesterase gloN (281 aa).

The segment at 207–233 is disordered; sequence LDDGSNNSRDLNETSPTETSNDSETQA. The span at 210-232 shows a compositional bias: polar residues; that stretch reads GSNNSRDLNETSPTETSNDSETQ.

This sequence belongs to the AMT4 thioesterase family.

It participates in mycotoxin biosynthesis. In terms of biological role, probable thioesterase; part of the gene cluster that mediates the biosynthesis of pneumocandins, lipohexapeptides of the echinocandin family that prevent fungal cell wall formation by non-competitive inhibition of beta-1,3-glucan synthase. The 10,12-dimethylmyristoyl side chain is synthesized by the reducing polyketide synthase gloL/GLPKS4. The thioesterase gloN/GLHYD exclusively interacts with gloL/GLPKS4 to maintain turnover of the polyketide side chain. The 10R,12S-dimethylmyristic acid is then transferred to the first thiolation domain of the nonribosomal peptide synthetase gloA/GLNRPS4 by the acyl-AMP ligase gloD/GLligase, followed by its acylation to L-ornithine to trigger elongation of the cyclic hexapeptide. L-ornithine, 4R-hydroxyl-L-proline (generated from L-proline by the dioxygenase gloF/GLOXY2), 3S-hydroxyl-L-homotyrosine (generated by gloG/GLHtyB, gloH/GLHtyA, gloI/GLHtyC, gloJ/GLHtyD and hydroxylated at C-3 by the dioxygenase gloM/GLOXY1), 3R-hydroxyl-L-glutamine (generated from L-glutamine probably by the dioxygenase gloE/GLOXY3) and 3S-hydroxyl-L-proline (generated from L-proline by the dioxygenase gloF/GLOXY2 to yield pneumocandin B0), or 3S-hydroxyl-4S-methyl-L-proline (generated from L-leucine by the dioxygenase gloC/GLOXY4 to yield pneumocandin A0) are sequentially added to the growing chain. The last C domain of gloA/GLNRPS4 is proposed to be responsible for cyclization by condensation to form the peptide bond between L-ornithine and 3S-hydroxyl-4S-methyl-L-proline (for pneumocandin A0) or 3S-hydroxyl-L-proline (for pneumocandin B0). Finally, the subsequent C-4 hydroxylation of 3S-hydroxyl-L-homotyrosine and L-ornithine dihydroxylation at C-4 and C-5 are performed by the cytochrome P450 monooxygenases gloP/GLP450-1 and gloO/GLP450-2, respectively. The protein is Probable thioesterase gloN of Glarea lozoyensis (strain ATCC 20868 / MF5171).